A 517-amino-acid chain; its full sequence is Serine hydroxymethyltransferase 1, mitochondrial (517 aa).

Residues 1–31 (MAMALALRRLSSSADKPLQRLFNGGHLYSMS) constitute a mitochondrion transit peptide. N6-(pyridoxal phosphate)lysine is present on Lys-287.

Belongs to the SHMT family. Homotetramer. Requires pyridoxal 5'-phosphate as cofactor.

The protein localises to the mitochondrion. It carries out the reaction (6R)-5,10-methylene-5,6,7,8-tetrahydrofolate + glycine + H2O = (6S)-5,6,7,8-tetrahydrofolate + L-serine. It functions in the pathway one-carbon metabolism; tetrahydrofolate interconversion. In terms of biological role, catalyzes the interconversion of serine and glycine. The protein is Serine hydroxymethyltransferase 1, mitochondrial of Flaveria pringlei.